A 446-amino-acid chain; its full sequence is Adenylosuccinate synthetase (446 aa).

Residues 20–26 and 48–50 each bind GTP; these read GDEGKGK and GHT. The active-site Proton acceptor is Asp21. The Mg(2+) site is built by Asp21 and Gly48. IMP-binding positions include 21-24, 46-49, Thr137, Arg151, Gln232, Thr247, and Arg319; these read DEGK and NAGH. The active-site Proton donor is His49. 315-321 contacts substrate; it reads SVTGRPR. Residues Arg321, 347-349, and 429-431 contribute to the GTP site; these read KLD and STG.

Belongs to the adenylosuccinate synthetase family. As to quaternary structure, homodimer. Mg(2+) is required as a cofactor.

It is found in the cytoplasm. The catalysed reaction is IMP + L-aspartate + GTP = N(6)-(1,2-dicarboxyethyl)-AMP + GDP + phosphate + 2 H(+). It functions in the pathway purine metabolism; AMP biosynthesis via de novo pathway; AMP from IMP: step 1/2. Plays an important role in the de novo pathway of purine nucleotide biosynthesis. Catalyzes the first committed step in the biosynthesis of AMP from IMP. The chain is Adenylosuccinate synthetase from Polynucleobacter necessarius subsp. necessarius (strain STIR1).